Here is a 147-residue protein sequence, read N- to C-terminus: Cyanate hydratase (147 aa).

Active-site residues include Arg-88, Glu-91, and Ser-114.

It belongs to the cyanase family.

It catalyses the reaction cyanate + hydrogencarbonate + 3 H(+) = NH4(+) + 2 CO2. Its function is as follows. Catalyzes the reaction of cyanate with bicarbonate to produce ammonia and carbon dioxide. This Variovorax paradoxus (strain S110) protein is Cyanate hydratase.